The chain runs to 287 residues: Nucleotide-binding protein Asuc_0930 (287 aa).

8 to 15 (GRSGAGKS) lines the ATP pocket. 56–59 (DIRN) lines the GTP pocket.

It belongs to the RapZ-like family.

In terms of biological role, displays ATPase and GTPase activities. The chain is Nucleotide-binding protein Asuc_0930 from Actinobacillus succinogenes (strain ATCC 55618 / DSM 22257 / CCUG 43843 / 130Z).